The following is a 227-amino-acid chain: Cytochrome c oxidase subunit 2 (227 aa).

Over 1-14 (MAHPVQLGLQDATS) the chain is Mitochondrial intermembrane. Residues 15–45 (PVMEELITFHDHALMAMSLISLLVLYALFST) traverse the membrane as a helical segment. Residues 46 to 59 (LTTKLTNTNITDAQ) lie on the Mitochondrial matrix side of the membrane. A helical membrane pass occupies residues 60–87 (EMEIIWTILPAIILVLIALPSLRILYLT). Over 88–227 (DEVNNPSFTI…IFEMGPVFTL (140 aa)) the chain is Mitochondrial intermembrane. Residues histidine 161, cysteine 196, glutamate 198, cysteine 200, histidine 204, and methionine 207 each coordinate Cu cation. Mg(2+) is bound at residue glutamate 198.

This sequence belongs to the cytochrome c oxidase subunit 2 family. As to quaternary structure, component of the cytochrome c oxidase (complex IV, CIV), a multisubunit enzyme composed of 14 subunits. The complex is composed of a catalytic core of 3 subunits MT-CO1, MT-CO2 and MT-CO3, encoded in the mitochondrial DNA, and 11 supernumerary subunits COX4I, COX5A, COX5B, COX6A, COX6B, COX6C, COX7A, COX7B, COX7C, COX8 and NDUFA4, which are encoded in the nuclear genome. The complex exists as a monomer or a dimer and forms supercomplexes (SCs) in the inner mitochondrial membrane with NADH-ubiquinone oxidoreductase (complex I, CI) and ubiquinol-cytochrome c oxidoreductase (cytochrome b-c1 complex, complex III, CIII), resulting in different assemblies (supercomplex SCI(1)III(2)IV(1) and megacomplex MCI(2)III(2)IV(2)). Found in a complex with TMEM177, COA6, COX18, COX20, SCO1 and SCO2. Interacts with TMEM177 in a COX20-dependent manner. Interacts with COX20. Interacts with COX16. It depends on Cu cation as a cofactor.

Its subcellular location is the mitochondrion inner membrane. It catalyses the reaction 4 Fe(II)-[cytochrome c] + O2 + 8 H(+)(in) = 4 Fe(III)-[cytochrome c] + 2 H2O + 4 H(+)(out). Its function is as follows. Component of the cytochrome c oxidase, the last enzyme in the mitochondrial electron transport chain which drives oxidative phosphorylation. The respiratory chain contains 3 multisubunit complexes succinate dehydrogenase (complex II, CII), ubiquinol-cytochrome c oxidoreductase (cytochrome b-c1 complex, complex III, CIII) and cytochrome c oxidase (complex IV, CIV), that cooperate to transfer electrons derived from NADH and succinate to molecular oxygen, creating an electrochemical gradient over the inner membrane that drives transmembrane transport and the ATP synthase. Cytochrome c oxidase is the component of the respiratory chain that catalyzes the reduction of oxygen to water. Electrons originating from reduced cytochrome c in the intermembrane space (IMS) are transferred via the dinuclear copper A center (CU(A)) of subunit 2 and heme A of subunit 1 to the active site in subunit 1, a binuclear center (BNC) formed by heme A3 and copper B (CU(B)). The BNC reduces molecular oxygen to 2 water molecules using 4 electrons from cytochrome c in the IMS and 4 protons from the mitochondrial matrix. The sequence is that of Cytochrome c oxidase subunit 2 (MT-CO2) from Cercocebus galeritus (Tana river mangabey).